A 219-amino-acid chain; its full sequence is Probable GTP-binding protein EngB (219 aa).

An EngB-type G domain is found at valine 24–proline 207. GTP-binding positions include glycine 32–serine 39, glycine 59–histidine 63, aspartate 81–glycine 84, threonine 148–aspartate 151, and phenylalanine 186–alanine 188. The Mg(2+) site is built by serine 39 and threonine 61.

Belongs to the TRAFAC class TrmE-Era-EngA-EngB-Septin-like GTPase superfamily. EngB GTPase family. Requires Mg(2+) as cofactor.

In terms of biological role, necessary for normal cell division and for the maintenance of normal septation. This Burkholderia ambifaria (strain ATCC BAA-244 / DSM 16087 / CCUG 44356 / LMG 19182 / AMMD) (Burkholderia cepacia (strain AMMD)) protein is Probable GTP-binding protein EngB.